Consider the following 237-residue polypeptide: Oil body-associated protein 2C (237 aa).

It belongs to the OBAP family.

This chain is Oil body-associated protein 2C, found in Arabidopsis thaliana (Mouse-ear cress).